The sequence spans 317 residues: Probable pathogenesis-related protein CaO19.6200 (317 aa).

Positions 1–23 (MKFLQSFPVILAVFSFAANLVSS) are cleaved as a signal peptide. Disordered regions lie at residues 52-116 (RLET…TTVT) and 155-179 (PSAP…DSQL). Low complexity predominate over residues 58 to 76 (PTSTTTTIVIPSSKPSSPE). 2 stretches are compositionally biased toward polar residues: residues 84–116 (QPMF…TTVT) and 168–179 (ENNSGTNDDSQL). N169 carries N-linked (GlcNAc...) asparagine glycosylation. The SCP domain maps to 187–297 (LEAHNIKRAS…GWGLYIICNY (111 aa)).

The protein belongs to the CRISP family.

Its subcellular location is the secreted. Secreted protein that acts as a virulence factor during infections. This Candida albicans (strain SC5314 / ATCC MYA-2876) (Yeast) protein is Probable pathogenesis-related protein CaO19.6200.